Here is a 150-residue protein sequence, read N- to C-terminus: Cell division protein SepF (150 aa).

The protein belongs to the SepF family. Homodimer. Interacts with FtsZ.

It is found in the cytoplasm. In terms of biological role, cell division protein that is part of the divisome complex and is recruited early to the Z-ring. Probably stimulates Z-ring formation, perhaps through the cross-linking of FtsZ protofilaments. Its function overlaps with FtsA. This is Cell division protein SepF from Clostridium botulinum (strain ATCC 19397 / Type A).